The chain runs to 735 residues: Transmembrane channel-like protein 7 (735 aa).

Residues 1–164 (MSEFGAGAEL…QSYFSFLRFL (164 aa)) are Extracellular-facing. A helical membrane pass occupies residues 165–185 (VLLNFLMFILMFSFVTLPAVI). Over 186 to 233 (SNYGIFNSSSTKISPNNTEPYCTVYTPSGNKGLVYFYTYLKDLLTGTG) the chain is Cytoplasmic. A helical transmembrane segment spans residues 234-254 (FLEVTVLFYGYYTIDAAWFSV). The Extracellular portion of the chain corresponds to 255–258 (LRYN). A helical membrane pass occupies residues 259 to 279 (LPLAYLLTTFAYLALSFVWII). Residues 280 to 355 (KRSVERFRQH…TMKEKLQIYS (76 aa)) lie on the Cytoplasmic side of the membrane. The helical transmembrane segment at 356 to 376 (LRIFINIIVIAVLSGCFYSIY) threads the bilayer. The Extracellular portion of the chain corresponds to 377 to 403 (RATVFSQENSSVSIRRNVMIANLLVQY). Asn385 carries an N-linked (GlcNAc...) asparagine glycan. Residues 404–424 (LPSIVITSANFIAPQIFSFLI) traverse the membrane as a helical segment. Residues 425-436 (RFEDYSAAFEIR) lie on the Cytoplasmic side of the membrane. A helical membrane pass occupies residues 437 to 457 (LTLIRCVFVRLANVGVLLFSL). Residues 458–488 (WSQIHCDNDQCKACGYDYELYPCWESAVGQE) lie on the Extracellular side of the membrane. Residues 489–509 (MYKLLIFDFMIIIAMTLFVDF) form a helical membrane-spanning segment. Topologically, residues 510–548 (PRKLLVTYCSWKLVQWWGLQEFGISDNVLEIIYGQTICW) are cytoplasmic. Residues 549–569 (IGTFFSPLLPAIATIKYFIIF) traverse the membrane as a helical segment. Topologically, residues 570–594 (YIKKISLIHTRKPASRPIRASSSNF) are extracellular. A helical transmembrane segment spans residues 595-615 (FFLAVLLIGLILAFVPLGVSI). Residues 616–634 (ALISSSKACGPFRNFNTSW) are Cytoplasmic-facing. A helical membrane pass occupies residues 635 to 655 (AIVPYTILEFPIGLQKFLYGI). At 656-658 (ASE) the chain is on the extracellular side. Residues 659-679 (AFAVPFFVIACLFMFYFIALA) traverse the membrane as a helical segment. At 680–735 (GAHKRVVEQLREQLVTESRDKLFLLEKLSEAQKNSGKPQKARKLTSSWLLEPLDKG) the chain is on the cytoplasmic side. Positions 710–735 (AQKNSGKPQKARKLTSSWLLEPLDKG) are disordered.

Belongs to the TMC family.

The protein localises to the membrane. Functionally, probable component of an ion channel. In Gallus gallus (Chicken), this protein is Transmembrane channel-like protein 7 (Tmc7).